A 267-amino-acid chain; its full sequence is Serine acetyltransferase (267 aa).

Belongs to the transferase hexapeptide repeat family.

It is found in the cytoplasm. The catalysed reaction is L-serine + acetyl-CoA = O-acetyl-L-serine + CoA. Its pathway is amino-acid biosynthesis; L-cysteine biosynthesis; L-cysteine from L-serine: step 1/2. The protein is Serine acetyltransferase (cysE) of Haemophilus influenzae (strain ATCC 51907 / DSM 11121 / KW20 / Rd).